We begin with the raw amino-acid sequence, 150 residues long: 3-hydroxyacyl-[acyl-carrier-protein] dehydratase FabZ (150 aa).

The active site involves His-54.

Belongs to the thioester dehydratase family. FabZ subfamily.

The protein resides in the cytoplasm. It carries out the reaction a (3R)-hydroxyacyl-[ACP] = a (2E)-enoyl-[ACP] + H2O. Involved in unsaturated fatty acids biosynthesis. Catalyzes the dehydration of short chain beta-hydroxyacyl-ACPs and long chain saturated and unsaturated beta-hydroxyacyl-ACPs. The chain is 3-hydroxyacyl-[acyl-carrier-protein] dehydratase FabZ from Vibrio campbellii (strain ATCC BAA-1116).